A 235-amino-acid chain; its full sequence is Thiopurine S-methyltransferase (235 aa).

Residues W13, L48, E69, and R126 each coordinate S-adenosyl-L-methionine. A disordered region spans residues 199–235 (PDPQNGAPRRVEHKVYQLTGKRPASPEADGRAAETED). Residues 226–235 (ADGRAAETED) show a composition bias toward basic and acidic residues.

Belongs to the class I-like SAM-binding methyltransferase superfamily. TPMT family.

It localises to the cytoplasm. It carries out the reaction S-adenosyl-L-methionine + a thiopurine = S-adenosyl-L-homocysteine + a thiopurine S-methylether.. In Stutzerimonas stutzeri (strain A1501) (Pseudomonas stutzeri), this protein is Thiopurine S-methyltransferase.